Consider the following 666-residue polypeptide: DNA ligase (666 aa).

NAD(+)-binding positions include 31–35, 80–81, and glutamate 110; these read DKEFD and SL. Lysine 112 functions as the N6-AMP-lysine intermediate in the catalytic mechanism. Residues arginine 133, glutamate 170, lysine 285, and lysine 309 each coordinate NAD(+). Positions 404, 407, 422, and 428 each coordinate Zn(2+). Positions 588–666 constitute a BRCT domain; sequence GYTDKLAGQS…SEDEFLKLIS (79 aa).

It belongs to the NAD-dependent DNA ligase family. LigA subfamily. The cofactor is Mg(2+). Requires Mn(2+) as cofactor.

It carries out the reaction NAD(+) + (deoxyribonucleotide)n-3'-hydroxyl + 5'-phospho-(deoxyribonucleotide)m = (deoxyribonucleotide)n+m + AMP + beta-nicotinamide D-nucleotide.. Functionally, DNA ligase that catalyzes the formation of phosphodiester linkages between 5'-phosphoryl and 3'-hydroxyl groups in double-stranded DNA using NAD as a coenzyme and as the energy source for the reaction. It is essential for DNA replication and repair of damaged DNA. This is DNA ligase from Bacteroides thetaiotaomicron (strain ATCC 29148 / DSM 2079 / JCM 5827 / CCUG 10774 / NCTC 10582 / VPI-5482 / E50).